A 388-amino-acid polypeptide reads, in one-letter code: Na(+)/H(+) antiporter NhaA (388 aa).

The Cytoplasmic segment spans residues 1–11 (MKHLHRFFSSD). Residues 12–31 (ASGGIILIIAAILAMMMANS) form a helical membrane-spanning segment. At 32-58 (GATSGWYHDFLETPVQLRVGSLEINKN) the chain is on the periplasmic side. The helical transmembrane segment at 59 to 80 (MLLWINDALMAVFFLLVGLEVK) threads the bilayer. The Cytoplasmic portion of the chain corresponds to 81 to 96 (RELMQGSLASLRQAAF). A helical transmembrane segment spans residues 97–116 (PVIAAIGGMIVPALLYLAFN). At 117 to 122 (YADPIT) the chain is on the periplasmic side. A helical transmembrane segment spans residues 123–130 (REGWAIPA). Residues 131–154 (ATDIAFALGVLALLGSRVPLALKI) are Cytoplasmic-facing. The helical transmembrane segment at 155–176 (FLMALAIIDDLGAIIIIALFYT) threads the bilayer. Over 177 to 180 (NDLS) the chain is Periplasmic. Residues 181 to 200 (MASLGVAAVAIAVLAVLNLC) traverse the membrane as a helical segment. Topologically, residues 201–204 (GVRR) are cytoplasmic. A helical membrane pass occupies residues 205 to 222 (TGVYILVGVVLWTAVLKS). Position 223 (glycine 223) is a topological domain, periplasmic. A helical membrane pass occupies residues 224–236 (VHATLAGVIVGFF). Over 237-253 (IPLKEKHGRSPAKRLEH) the chain is Cytoplasmic. The chain crosses the membrane as a helical span at residues 254–272 (VLHPWVAYLILPLFAFANA). Topologically, residues 273-286 (GVSLQGVTLDGLTS) are periplasmic. The chain crosses the membrane as a helical span at residues 287–310 (ILPLGIIAGLLIGKPLGISLFCWL). At 311–339 (ALRLKLAHLPEGTTYQQIMAVGILCGIGF) the chain is on the cytoplasmic side. Residues 340–350 (TMSIFIASLAF) traverse the membrane as a helical segment. Over 351 to 357 (GSVDPEL) the chain is Periplasmic. The helical transmembrane segment at 358 to 380 (INWAKLGILVGSISSAVIGYSWL) threads the bilayer. The Cytoplasmic portion of the chain corresponds to 381–388 (RVRLRPSV).

This sequence belongs to the NhaA Na(+)/H(+) (TC 2.A.33) antiporter family.

It localises to the cell inner membrane. The catalysed reaction is Na(+)(in) + 2 H(+)(out) = Na(+)(out) + 2 H(+)(in). Na(+)/H(+) antiporter that extrudes sodium in exchange for external protons. The polypeptide is Na(+)/H(+) antiporter NhaA (Shigella boydii serotype 4 (strain Sb227)).